The sequence spans 1221 residues: DNA-directed RNA polymerase subunit beta' (1221 aa).

Residues C60, C62, C75, and C78 each contribute to the Zn(2+) site. The Mg(2+) site is built by D449, D451, and D453. Residues C821, C896, C903, and C906 each coordinate Zn(2+).

The protein belongs to the RNA polymerase beta' chain family. The RNAP catalytic core consists of 2 alpha, 1 beta, 1 beta' and 1 omega subunit. When a sigma factor is associated with the core the holoenzyme is formed, which can initiate transcription. The cofactor is Mg(2+). Requires Zn(2+) as cofactor.

It catalyses the reaction RNA(n) + a ribonucleoside 5'-triphosphate = RNA(n+1) + diphosphate. Functionally, DNA-dependent RNA polymerase catalyzes the transcription of DNA into RNA using the four ribonucleoside triphosphates as substrates. This chain is DNA-directed RNA polymerase subunit beta', found in Lactobacillus delbrueckii subsp. bulgaricus (strain ATCC 11842 / DSM 20081 / BCRC 10696 / JCM 1002 / NBRC 13953 / NCIMB 11778 / NCTC 12712 / WDCM 00102 / Lb 14).